The sequence spans 353 residues: Photosystem II protein D1 (353 aa).

Residue Thr2 is modified to N-acetylthreonine. A Phosphothreonine modification is found at Thr2. 3 helical membrane-spanning segments follow: residues 29–46 (YIGW…TATS), 118–133 (HFLL…EWEL), and 142–156 (WIAV…AATA). Position 118 (His118) interacts with chlorophyll a. Tyr126 contacts pheophytin a. 2 residues coordinate [CaMn4O5] cluster: Asp170 and Glu189. Residues 197–218 (FHMLGVAGVFGGSLFSAMHGSL) traverse the membrane as a helical segment. A chlorophyll a-binding site is contributed by His198. Residues His215 and 264 to 265 (SF) contribute to the a quinone site. Position 215 (His215) interacts with Fe cation. Fe cation is bound at residue His272. A helical membrane pass occupies residues 274–288 (FLAAWPVVGIWFTAL). [CaMn4O5] cluster contacts are provided by His332, Glu333, Asp342, and Ala344. A propeptide spanning residues 345 to 353 (AVEAPSING) is cleaved from the precursor.

This sequence belongs to the reaction center PufL/M/PsbA/D family. As to quaternary structure, PSII is composed of 1 copy each of membrane proteins PsbA, PsbB, PsbC, PsbD, PsbE, PsbF, PsbH, PsbI, PsbJ, PsbK, PsbL, PsbM, PsbT, PsbX, PsbY, PsbZ, Psb30/Ycf12, at least 3 peripheral proteins of the oxygen-evolving complex and a large number of cofactors. It forms dimeric complexes. Requires The D1/D2 heterodimer binds P680, chlorophylls that are the primary electron donor of PSII, and subsequent electron acceptors. It shares a non-heme iron and each subunit binds pheophytin, quinone, additional chlorophylls, carotenoids and lipids. D1 provides most of the ligands for the Mn4-Ca-O5 cluster of the oxygen-evolving complex (OEC). There is also a Cl(-1) ion associated with D1 and D2, which is required for oxygen evolution. The PSII complex binds additional chlorophylls, carotenoids and specific lipids. as cofactor. Post-translationally, tyr-161 forms a radical intermediate that is referred to as redox-active TyrZ, YZ or Y-Z. C-terminally processed by CTPA; processing is essential to allow assembly of the oxygen-evolving complex and thus photosynthetic growth.

The protein localises to the plastid. Its subcellular location is the chloroplast thylakoid membrane. The catalysed reaction is 2 a plastoquinone + 4 hnu + 2 H2O = 2 a plastoquinol + O2. Functionally, photosystem II (PSII) is a light-driven water:plastoquinone oxidoreductase that uses light energy to abstract electrons from H(2)O, generating O(2) and a proton gradient subsequently used for ATP formation. It consists of a core antenna complex that captures photons, and an electron transfer chain that converts photonic excitation into a charge separation. The D1/D2 (PsbA/PsbD) reaction center heterodimer binds P680, the primary electron donor of PSII as well as several subsequent electron acceptors. This chain is Photosystem II protein D1, found in Medicago sativa (Alfalfa).